We begin with the raw amino-acid sequence, 274 residues long: Short-chain dehydrogenase/reductase bsc3 (274 aa).

Residues Ile-14, Tyr-170, Lys-174, Ile-203, and Thr-205 each contribute to the NADP(+) site. Tyr-170 functions as the Proton donor in the catalytic mechanism. Residue Lys-174 is the Lowers pKa of active site Tyr of the active site.

This sequence belongs to the short-chain dehydrogenases/reductases (SDR) family.

Its pathway is mycotoxin biosynthesis. Short-chain dehydrogenase/reductase; part of the gene cluster that mediates the biosynthesis of the diterpene glucoside brassicicene C. In the first step of the brassicicene C biosynthesis, the bifunctional diterpene synthase bsc8 that possesses both prenyl transferase and terpene cyclase activity, converts isopentenyl diphosphate and dimethylallyl diphosphate into geranylgeranyl diphosphate (GGDP) that is further converted into fusicocca-2,10(14)-diene, the first precursor for brassicicene C. Fusicocca-2,10(14)-diene is then substrate of cytochrome P450 monooxygenase bsc1 for hydroxylation at the C-8 position. Oxidation at C-16 position to aldehyde is then catalyzed by the cytochrome P450 monooyxygenase bsc7, yielding fusicocca-2,10(14)-diene-8-beta,16-diol. Follows the isomerization of the double bond and reduction of aldehyde to alcohol catalyzed by the short-chain dehydrogenase/reductase bsc3 to yield the diol compound fusicocca-1,10(14)-diene-8 beta,16-diol. The next step is the oxidation at the C-3 position of fusicocca-2,10(14)-diene-8-beta,16-diol catalyzed by the alpha-ketoglutarate dependent dioxygenase bsc9, to produce a triol compound. Methylation of the hydroxy group at position 16 is performed by the methyltransferase bsc6. 16-O-methylation is followed by oxidation at the C-13 position to ketone and an alkyl shift of the methyl group leads to brassicicene C. Although the probable acetyltransferase bsc4 is included in the gene cluster, no acetylation reactions are necessary for brassicicene C biosynthesis. However, the fact that brassicicene E, which is a structurally related compound having an acetoxy group at position 12, was previously isolated from another strain of A.brassicicola suggests that the ATCC 96836 strain might also produce a small amount of brassicicene E. The protein is Short-chain dehydrogenase/reductase bsc3 of Alternaria brassicicola (Dark leaf spot agent).